A 74-amino-acid chain; its full sequence is MPRYYEDKPEGGACAGVKEDLGACLLQSACVLQEGKSPRQCLKEGNCRALQYSFFECKRSMLDARSRFRGRKGY.

The CHCH domain maps to 27–65 (QSACVLQEGKSPRQCLKEGNCRALQYSFFECKRSMLDAR). Positions 30 to 41 (CVLQEGKSPRQC) match the Cx10C motif motif. Disulfide bonds link Cys-30/Cys-57 and Cys-41/Cys-47. Phosphoserine is present on Ser-37. The short motif at 47 to 57 (CRALQYSFFEC) is the Cx9C motif element.

The protein belongs to the PET191 family.

Functionally, involved in an early step of the mitochondrial complex IV assembly process. The chain is Cytochrome c oxidase assembly factor 5 (Coa5) from Mus musculus (Mouse).